The following is a 529-amino-acid chain: Transcription factor BIM1 (529 aa).

Disordered regions lie at residues 1-91 (MELP…HVLP), 245-291 (KKES…RRSK), 425-450 (RVASSEAVEPSPSSRSQKEEEDEEVL), and 491-529 (AKQSSSSSFKDHEVREPVSRTRNDNVKQTRKPKRLKTGQ). Pro residues predominate over residues 76–86 (KPPPPAPPPPL). 2 stretches are compositionally biased toward basic and acidic residues: residues 255–265 (HRVDLRVKADV) and 282–291 (SATEQRRRSK). Positions 276-326 (TPRSKHSATEQRRRSKINDRFQMLRQLIPNSDQKRDKASFLLEVIEYIQFL) constitute a bHLH domain. A compositionally biased stretch (low complexity) spans 426–438 (VASSEAVEPSPSS). The span at 499–517 (FKDHEVREPVSRTRNDNVK) shows a compositional bias: basic and acidic residues. The segment covering 518 to 529 (QTRKPKRLKTGQ) has biased composition (basic residues).

As to quaternary structure, homodimer. Interacts with BZR2/BES1 through both C-terminal and bHLH domains. Also interacts with LHW. Expressed constitutively in roots.

Its subcellular location is the nucleus. Positive brassinosteroid-signaling protein. Transcription factor that bind specifically to the DNA sequence 5'-CANNTG-3'(E box). Can bind individually to the promoter as a homodimer or synergistically as a heterodimer with BZR2/BES1. Does not itself activate transcription but enhances BZR2/BES1-mediated target gene activation. This is Transcription factor BIM1 (BIM1) from Arabidopsis thaliana (Mouse-ear cress).